The sequence spans 445 residues: WD repeat domain phosphoinositide-interacting protein 2 (445 aa).

The stretch at 182 to 222 (AHDSPLAALAFDASGTKLATASEKGTVIRVFSIPEGQKLFE) is one WD 1 repeat. The L/FRRG motif motif lies at 223–226 (FRRG). WD repeat units lie at residues 228–267 (KRCV…EKPP) and 311–349 (GHKN…GGEC). Phosphoserine is present on S395.

Belongs to the WD repeat PROPPIN family. Interacts with TECPR1. Interacts with ATG16L1. Interacts with ATG5. Interacts with WIPI1. Interacts with WDR45. May interact with NUDC. Interacts with ULK1 and RB1CC1.

It localises to the preautophagosomal structure membrane. In terms of biological role, component of the autophagy machinery that controls the major intracellular degradation process by which cytoplasmic materials are packaged into autophagosomes and delivered to lysosomes for degradation. Involved in an early step of the formation of preautophagosomal structures. Binds and is activated by phosphatidylinositol 3-phosphate (PtdIns3P) forming on membranes of the endoplasmic reticulum upon activation of the upstream ULK1 and PI3 kinases. Mediates ER-isolation membranes contacts by interacting with the ULK1:RB1CC1 complex and PtdIns3P. Once activated, WIPI2 recruits at phagophore assembly sites the ATG12-ATG5-ATG16L1 complex that directly controls the elongation of the nascent autophagosomal membrane. The polypeptide is WD repeat domain phosphoinositide-interacting protein 2 (Mus musculus (Mouse)).